A 427-amino-acid polypeptide reads, in one-letter code: Acetylornithine aminotransferase, mitochondrial (427 aa).

Residue Lys279 is modified to N6-(pyridoxal phosphate)lysine.

This sequence belongs to the class-III pyridoxal-phosphate-dependent aminotransferase family. Requires pyridoxal 5'-phosphate as cofactor.

It localises to the mitochondrion matrix. It carries out the reaction N(2)-acetyl-L-ornithine + 2-oxoglutarate = N-acetyl-L-glutamate 5-semialdehyde + L-glutamate. It participates in amino-acid biosynthesis; L-arginine biosynthesis; N(2)-acetyl-L-ornithine from L-glutamate: step 4/4. This is Acetylornithine aminotransferase, mitochondrial (ARG8) from Candida glabrata (strain ATCC 2001 / BCRC 20586 / JCM 3761 / NBRC 0622 / NRRL Y-65 / CBS 138) (Yeast).